The chain runs to 519 residues: Developmental regulatory protein wetA (519 aa).

Disordered regions lie at residues 105-165 (PSRP…MRSS), 270-294 (PSSA…WQSD), 301-320 (LSFT…PMPS), 325-344 (QQAS…NVGN), 389-452 (SQIH…GSNK), and 470-495 (LTGV…RRRK). A compositionally biased stretch (low complexity) spans 108–118 (PTATHALSTSP). Residues 155 to 165 (QSFSPSLMRSS) are compositionally biased toward polar residues. Residues 301 to 315 (LSFTPDLQGQDSQWW) show a composition bias toward polar residues. Over residues 389–400 (SQIHNVSRSPSL) the composition is skewed to polar residues. Over residues 419-428 (PTHRRTHSRK) the composition is skewed to basic residues. The span at 435–452 (NAPKPAKASGSSSRGSNK) shows a compositional bias: low complexity.

This sequence belongs to the wetA family.

In terms of biological role, brlA, abaA and wetA are pivotal regulators of conidiophore development and conidium maturation. They act individually and together to regulate their own expression and that of numerous other sporulation-specific genes. In Penicillium camembertii, this protein is Developmental regulatory protein wetA.